We begin with the raw amino-acid sequence, 634 residues long: DNA gyrase subunit B (634 aa).

Positions 416–530 constitute a Toprim domain; the sequence is REIYIVEGDS…NGHVYIAMPP (115 aa). Glu422, Asp495, and Asp497 together coordinate Mg(2+).

Belongs to the type II topoisomerase GyrB family. Heterotetramer, composed of two GyrA and two GyrB chains. In the heterotetramer, GyrA contains the active site tyrosine that forms a transient covalent intermediate with DNA, while GyrB binds cofactors and catalyzes ATP hydrolysis. It depends on Mg(2+) as a cofactor. The cofactor is Mn(2+). Ca(2+) serves as cofactor.

Its subcellular location is the cytoplasm. The catalysed reaction is ATP-dependent breakage, passage and rejoining of double-stranded DNA.. Functionally, a type II topoisomerase that negatively supercoils closed circular double-stranded (ds) DNA in an ATP-dependent manner to modulate DNA topology and maintain chromosomes in an underwound state. Negative supercoiling favors strand separation, and DNA replication, transcription, recombination and repair, all of which involve strand separation. Also able to catalyze the interconversion of other topological isomers of dsDNA rings, including catenanes and knotted rings. Type II topoisomerases break and join 2 DNA strands simultaneously in an ATP-dependent manner. The sequence is that of DNA gyrase subunit B from Borrelia hermsii.